The chain runs to 216 residues: UPF0301 protein Nham_3550 (216 aa).

The segment covering 1–10 has biased composition (basic residues); that stretch reads MSAARKRPGT. The interval 1-25 is disordered; it reads MSAARKRPGTGRRQTDDADTGAPDQ.

This sequence belongs to the UPF0301 (AlgH) family.

This chain is UPF0301 protein Nham_3550, found in Nitrobacter hamburgensis (strain DSM 10229 / NCIMB 13809 / X14).